Consider the following 468-residue polypeptide: ATP synthase subunit beta (468 aa).

ATP is bound at residue 155–162; that stretch reads GGAGVGKT.

Belongs to the ATPase alpha/beta chains family. F-type ATPases have 2 components, CF(1) - the catalytic core - and CF(0) - the membrane proton channel. CF(1) has five subunits: alpha(3), beta(3), gamma(1), delta(1), epsilon(1). CF(0) has three main subunits: a(1), b(2) and c(9-12). The alpha and beta chains form an alternating ring which encloses part of the gamma chain. CF(1) is attached to CF(0) by a central stalk formed by the gamma and epsilon chains, while a peripheral stalk is formed by the delta and b chains.

It localises to the cell inner membrane. The catalysed reaction is ATP + H2O + 4 H(+)(in) = ADP + phosphate + 5 H(+)(out). Functionally, produces ATP from ADP in the presence of a proton gradient across the membrane. The catalytic sites are hosted primarily by the beta subunits. The chain is ATP synthase subunit beta from Thermotoga petrophila (strain ATCC BAA-488 / DSM 13995 / JCM 10881 / RKU-1).